The following is a 360-amino-acid chain: Arginase, non-hepatic 3 (360 aa).

Positions 122, 145, 147, and 149 each coordinate Mn(2+). Residues 147 to 151 (HADIN), 158 to 160 (SGN), and aspartate 204 contribute to the substrate site. 2 residues coordinate Mn(2+): aspartate 253 and aspartate 255. Substrate is bound by residues threonine 267 and glutamate 298.

It belongs to the arginase family. In terms of assembly, homotrimer. The cofactor is Mn(2+). As to expression, expressed at differing tadpole stages in tail, intestine, hindlimb and trunk region. Strongest in tadpole tail.

It carries out the reaction L-arginine + H2O = urea + L-ornithine. It functions in the pathway nitrogen metabolism; urea cycle; L-ornithine and urea from L-arginine: step 1/1. As well as its role in the urea cycle, may be involved in tissue remodeling. The sequence is that of Arginase, non-hepatic 3 (arg2-c) from Xenopus laevis (African clawed frog).